The chain runs to 332 residues: Cell growth regulator with RING finger domain protein 1 (332 aa).

Residues 274-309 (CVVCQNGGVNWVLLPCRHACLCDSCVCYFKQCPMCR) form an RING-type zinc finger.

As to expression, highly expressed in testis, lower levels of expression is seen in skeletal muscle, liver, lung and brain.

The protein resides in the nucleus. It localises to the endoplasmic reticulum. In terms of biological role, able to inhibit growth in several cell lines. The chain is Cell growth regulator with RING finger domain protein 1 (Cgrrf1) from Rattus norvegicus (Rat).